The primary structure comprises 445 residues: D-serine transporter DsdX (445 aa).

Helical transmembrane passes span 5 to 25, 29 to 49, 57 to 77, 106 to 126, 140 to 160, 178 to 198, 224 to 244, 265 to 285, 302 to 322, 343 to 363, 385 to 405, and 425 to 445; these read IWVVSTLLISIVLIVLTIVKF, PFLALLLASFFVGTMMGMGPL, SGIGGTLGFLAAVIGLGTILG, VLVGLICGITLFVEVGVVLLI, LLKLAIPLCTALMAVHCVVPP, VIVYGLLVGLMASLIGGPLFL, TLPSLGATLFTVLLPIALMLV, IGNPITATFIAVFVAYYVLGI, FGSIANILLIIGAGGAFNAIL, ILLAWLVALILHAAVGSATVA, IIAIAIGSGAIGCTIVTDSLF, and TATFIASVIALAGTFLLSFII.

This sequence belongs to the GntP permease family.

Its subcellular location is the cell inner membrane. Uptake of D-serine is inhibited by carbonyl cyanide m-chlorophenylhydrazone (CCCP), and at high concentrations of D-threonine, stimulated by D-cycloserine and not affected by D-alanine or glycine. Functionally, protein that allows transport of D-serine across the inner membrane, does not transport D-alanine nor probably glycine. Is probably a H(+) symporter, as CCCP inhibits transport. Transports D-serine more efficiently than CycA. This chain is D-serine transporter DsdX (dsdX), found in Escherichia coli O6:H1 (strain CFT073 / ATCC 700928 / UPEC).